We begin with the raw amino-acid sequence, 865 residues long: Bifunctional uridylyltransferase/uridylyl-removing enzyme (865 aa).

Residues 1 to 318 form a uridylyltransferase region; that stretch reads MPHVDLNPLK…FPRPDSDARL (318 aa). The segment at 319-675 is uridylyl-removing; the sequence is IDDDFRNLRE…VRPTEHGEGL (357 aa). An HD domain is found at 437–559; that stretch reads VDQHTLAVVR…VGDERRLAAL (123 aa). 2 consecutive ACT domains span residues 676 to 762 and 789 to 865; these read QVMV…RLPH and RLSV…QQAA. The segment at 747–767 is disordered; it reads DPHAARHAHAPRRLPHSHARR. Basic residues predominate over residues 751-767; it reads ARHAHAPRRLPHSHARR.

It belongs to the GlnD family. Requires Mg(2+) as cofactor.

It catalyses the reaction [protein-PII]-L-tyrosine + UTP = [protein-PII]-uridylyl-L-tyrosine + diphosphate. The catalysed reaction is [protein-PII]-uridylyl-L-tyrosine + H2O = [protein-PII]-L-tyrosine + UMP + H(+). With respect to regulation, uridylyltransferase (UTase) activity is inhibited by glutamine, while glutamine activates uridylyl-removing (UR) activity. Its function is as follows. Modifies, by uridylylation and deuridylylation, the PII regulatory proteins (GlnB and homologs), in response to the nitrogen status of the cell that GlnD senses through the glutamine level. Under low glutamine levels, catalyzes the conversion of the PII proteins and UTP to PII-UMP and PPi, while under higher glutamine levels, GlnD hydrolyzes PII-UMP to PII and UMP (deuridylylation). Thus, controls uridylylation state and activity of the PII proteins, and plays an important role in the regulation of nitrogen assimilation and metabolism. This chain is Bifunctional uridylyltransferase/uridylyl-removing enzyme, found in Bordetella parapertussis (strain 12822 / ATCC BAA-587 / NCTC 13253).